An 821-amino-acid chain; its full sequence is Leucine--tRNA ligase (821 aa).

The 'HIGH' region signature appears at 42-52 (PYPSGKLHMGH). Positions 583 to 587 (KMSKS) match the 'KMSKS' region motif. Lys586 serves as a coordination point for ATP.

The protein belongs to the class-I aminoacyl-tRNA synthetase family.

Its subcellular location is the cytoplasm. It carries out the reaction tRNA(Leu) + L-leucine + ATP = L-leucyl-tRNA(Leu) + AMP + diphosphate. The chain is Leucine--tRNA ligase from Carboxydothermus hydrogenoformans (strain ATCC BAA-161 / DSM 6008 / Z-2901).